Consider the following 155-residue polypeptide: Cytochrome c-type biogenesis protein CcmE (155 aa).

The Cytoplasmic segment spans residues 1 to 8 (MNPLRKKR). Residues 9-29 (LLIIAALLAGVGLAMTLALGA) traverse the membrane as a helical; Signal-anchor for type II membrane protein segment. Residues 30-155 (LKENINLFYT…GGSSTPAKQG (126 aa)) lie on the Periplasmic side of the membrane. The heme site is built by histidine 124 and tyrosine 128. Residues 134-155 (TKALRDSGQAAPGGSSTPAKQG) are disordered.

It belongs to the CcmE/CycJ family.

The protein resides in the cell inner membrane. Heme chaperone required for the biogenesis of c-type cytochromes. Transiently binds heme delivered by CcmC and transfers the heme to apo-cytochromes in a process facilitated by CcmF and CcmH. This Pseudomonas savastanoi pv. phaseolicola (strain 1448A / Race 6) (Pseudomonas syringae pv. phaseolicola (strain 1448A / Race 6)) protein is Cytochrome c-type biogenesis protein CcmE.